We begin with the raw amino-acid sequence, 111 residues long: Wound-induced proteinase inhibitor 1 (111 aa).

The N-terminal stretch at 1–23 (MESKFAHIIVFFLLATSFETLMA) is a signal peptide. A propeptide spanning residues 24 to 36 (RKEIDGPEVIELL) is cleaved from the precursor.

It belongs to the protease inhibitor I13 (potato type I serine protease inhibitor) family.

The protein resides in the secreted. The chain is Wound-induced proteinase inhibitor 1 (PIIF) from Solanum lycopersicum (Tomato).